Reading from the N-terminus, the 501-residue chain is ADP,ATP carrier protein 3 (501 aa).

12 consecutive transmembrane segments (helical) span residues 23-43 (LKLF…FGAL), 59-79 (IISF…TVLY), 90-110 (YIFY…AYII), 146-166 (YALM…LMFW), 183-203 (PVLG…LVFF), 227-247 (IMLQ…MLLF), 293-313 (IALL…PWKA), 326-346 (VNFM…FMII), 361-381 (LLTP…IIFI), 387-407 (CFGD…QNIL), 446-466 (FGKS…PTAT), and 470-490 (IIIY…WNVI).

It belongs to the ADP/ATP translocase tlc family.

It is found in the cell membrane. In terms of biological role, provides the rickettsial cell with host ATP in exchange for rickettsial ADP. This is an obligate exchange system. This energy acquiring activity is an important component of rickettsial parasitism. The chain is ADP,ATP carrier protein 3 (tlcC) from Rickettsia conorii (strain ATCC VR-613 / Malish 7).